Consider the following 2466-residue polypeptide: Highly reducing polyketide synthase apmlA (2466 aa).

The interval 1–57 (MSDHNHTNGTTNGNGIGSNGVQSHVPNGAHINGTSSGLKPNGISNGTTNGINGHAPS) is disordered. Over residues 41-53 (NGISNGTTNGING) the composition is skewed to low complexity. A Ketosynthase family 3 (KS3) domain is found at 62-491 (QTPVAVVGLA…GTNAHVVLEA (430 aa)). Catalysis depends on for beta-ketoacyl synthase activity residues Cys-235, His-372, and His-412. A malonyl-CoA:ACP transacylase (MAT) domain region spans residues 608 to 921 (IFTGQGAQWS…QYVAAAKRGA (314 aa)). Ser-700 acts as the For malonyltransferase activity in catalysis. Residues 988–1124 (HDLLGSKILS…GLVRIDEEAF (137 aa)) are N-terminal hotdog fold. Residues 988-1297 (HDLLGSKILS…RFDPISSRGD (310 aa)) are dehydratase (DH) domain. The PKS/mFAS DH domain occupies 988–1298 (HDLLGSKILS…FDPISSRGDQ (311 aa)). The Proton acceptor; for dehydratase activity role is filled by His-1020. The C-terminal hotdog fold stretch occupies residues 1137-1298 (AHPEPGAVGY…FDPISSRGDQ (162 aa)). Asp-1202 functions as the Proton donor; for dehydratase activity in the catalytic mechanism. The interval 1737–2061 (GTIDSLHYAE…STKHMGKLVL (325 aa)) is enoyl reductase (ER) domain. The interval 2087-2264 (TYLLVGGLKG…STVNLGIIEQ (178 aa)) is ketoreductase (KR) domain. One can recognise a Carrier domain in the interval 2382–2462 (ANLPQVVDAT…FLAEKIITKV (81 aa)). Residue Ser-2422 is modified to O-(pantetheine 4'-phosphoryl)serine.

Pantetheine 4'-phosphate is required as a cofactor.

Its pathway is secondary metabolite biosynthesis. Its function is as follows. Highly reducing polyketide synthase (HR-PKS); part of the gene cluster that mediates the biosynthesis of phaeospelide A, a fungal polyene macrolide with a 34-membered macrolactone ring and an all-trans conjugated hexaene structure. The HR-PKS ApmlA uses acetyl-CoA and malonyl-CoA as its starter and extender units, respectively, and provides the large carbon framework in phaeospelide via 16 cycles of polyketide chain elongation, which is the largest number identified in fungal iterative PKSs thus far. During round 1, the KR domain reduces beta-ketone to an L-oriented hydroxy group, while during later rounds, it provides hydroxy groups in the D-configuration. The characteristic conjugated hexaene moiety is built during the later rounds (10-15), when the KR and DH domains are at work but ER is off. Phylogenetic analysis of the DH domain suggests that a polyene formation is programmed in the DH domain. Finally, the mature ACP-tethered carbon chain is transferred to the serine residue of the thiohydrolase apmlB, followed by intramolecular macrolactonization, generating phaeospelide A. When one elongation cycle during rounds 7-9 is skipped, phaeospelide B is biosynthesized instead. In Arthrinium phaeospermum (Gymnosporium phaeospermum), this protein is Highly reducing polyketide synthase apmlA.